The chain runs to 291 residues: uncharacterized protein (291 aa).

The HTH lysR-type domain occupies 1 to 58 (MDLKWLQTFIAAAESESFREAAEHLYLTQPAVSQHMRKLEDELDMRLFLHSGRRVVLT). Positions 18–37 (FREAAEHLYLTQPAVSQHMR) form a DNA-binding region, H-T-H motif.

The protein belongs to the LysR transcriptional regulatory family.

This is an uncharacterized protein from Bacillus subtilis (strain 168).